Consider the following 294-residue polypeptide: Syntaxin-19 (294 aa).

The t-SNARE coiled-coil homology domain occupies 209–271 (LSEIEQRHKE…NNTKEKFGLA (63 aa)).

It belongs to the syntaxin family. Interacts with EGFR.

Its subcellular location is the cell membrane. It localises to the cytoplasm. Its function is as follows. Plays a role in endosomal trafficking of the epidermal growth factor receptor (EGFR). This is Syntaxin-19 (STX19) from Homo sapiens (Human).